Consider the following 251-residue polypeptide: Protein unc-119 homolog B (251 aa).

Over residues 1–13 (MSGSNPKAATAGS) the composition is skewed to polar residues. Residues 1 to 56 (MSGSNPKAATAGSQAGPGGLVAGKEEKKKAGGGVLNRLKARRQGPPHTPDDGSGAA) are disordered. Position 2 is an N-acetylserine (serine 2). Position 24 is an N6-acetyllysine (lysine 24). Position 142 (tyrosine 142) interacts with tetradecanoate.

The protein belongs to the PDE6D/unc-119 family. Found in a complex with ARL3, RP2 and UNC119B; RP2 induces hydrolysis of GTP ARL3 in the complex, leading to the release of UNC119B. Interacts with NPHP3 (when myristoylated). Interacts with CYS1 (when myristoylated). Interacts with MACIR; interaction only takes place when UNC119B is not liganded with myristoylated proteins.

The protein localises to the cell projection. It is found in the cilium. Functionally, myristoyl-binding protein that acts as a cargo adapter: specifically binds the myristoyl moiety of a subset of N-terminally myristoylated proteins and is required for their localization. Binds myristoylated NPHP3 and plays a key role in localization of NPHP3 to the primary cilium membrane. Does not bind all myristoylated proteins. Probably plays a role in trafficking proteins in photoreceptor cells. The chain is Protein unc-119 homolog B (Unc119b) from Mus musculus (Mouse).